The sequence spans 380 residues: Queuine tRNA-ribosyltransferase (380 aa).

Asp96 serves as the catalytic Proton acceptor. Residues 96–100, Asp150, Gln193, and Gly220 contribute to the substrate site; that span reads DSGGF. The tract at residues 251–257 is RNA binding; it reads GVGAPDS. Residue Asp270 is the Nucleophile of the active site. The interval 275 to 279 is RNA binding; important for wobble base 34 recognition; the sequence is TRIAR. Zn(2+) is bound by residues Cys308, Cys310, Cys313, and His339.

It belongs to the queuine tRNA-ribosyltransferase family. Homodimer. Within each dimer, one monomer is responsible for RNA recognition and catalysis, while the other monomer binds to the replacement base PreQ1. Requires Zn(2+) as cofactor.

The catalysed reaction is 7-aminomethyl-7-carbaguanine + guanosine(34) in tRNA = 7-aminomethyl-7-carbaguanosine(34) in tRNA + guanine. Its pathway is tRNA modification; tRNA-queuosine biosynthesis. In terms of biological role, catalyzes the base-exchange of a guanine (G) residue with the queuine precursor 7-aminomethyl-7-deazaguanine (PreQ1) at position 34 (anticodon wobble position) in tRNAs with GU(N) anticodons (tRNA-Asp, -Asn, -His and -Tyr). Catalysis occurs through a double-displacement mechanism. The nucleophile active site attacks the C1' of nucleotide 34 to detach the guanine base from the RNA, forming a covalent enzyme-RNA intermediate. The proton acceptor active site deprotonates the incoming PreQ1, allowing a nucleophilic attack on the C1' of the ribose to form the product. After dissociation, two additional enzymatic reactions on the tRNA convert PreQ1 to queuine (Q), resulting in the hypermodified nucleoside queuosine (7-(((4,5-cis-dihydroxy-2-cyclopenten-1-yl)amino)methyl)-7-deazaguanosine). This is Queuine tRNA-ribosyltransferase from Streptococcus sanguinis (strain SK36).